The following is a 33-amino-acid chain: Photosystem II reaction center protein Psb30 (33 aa).

The chain crosses the membrane as a helical span at residues 5-25; sequence LALTLVSLVLVVSAGPLVVVL.

It belongs to the Psb30/Ycf12 family. In terms of assembly, PSII is composed of 1 copy each of membrane proteins PsbA, PsbB, PsbC, PsbD, PsbE, PsbF, PsbH, PsbI, PsbJ, PsbK, PsbL, PsbM, PsbT, PsbX, PsbY, PsbZ, Psb30/Ycf12, peripheral proteins of the oxygen-evolving complex and a large number of cofactors. It forms dimeric complexes.

The protein resides in the plastid. The protein localises to the chloroplast thylakoid membrane. A core subunit of photosystem II (PSII), required for optimal photosynthesis, probably helps stabilize the reaction center. In Chlamydomonas reinhardtii (Chlamydomonas smithii), this protein is Photosystem II reaction center protein Psb30.